Reading from the N-terminus, the 353-residue chain is Photosystem II D2 protein (353 aa).

An N-acetylthreonine modification is found at T2. T2 is subject to Phosphothreonine. Residues 41–61 (CAYFALGGWLTGTTFVTSWYT) traverse the membrane as a helical segment. H118 is a chlorophyll a binding site. The chain crosses the membrane as a helical span at residues 125-141 (GFMLRQFELARSVQLRP). Residues Q130 and N143 each contribute to the pheophytin a site. A helical transmembrane segment spans residues 153–166 (VFVSVFLIYPLGQS). H198 provides a ligand contact to chlorophyll a. The chain crosses the membrane as a helical span at residues 208-228 (AALLCAIHGATVENTLFEDGD). A plastoquinone-binding residues include H215 and F262. Residue H215 coordinates Fe cation. Position 269 (H269) interacts with Fe cation. The helical transmembrane segment at 279 to 295 (GLWMSAIGVVGLALNLR) threads the bilayer.

This sequence belongs to the reaction center PufL/M/PsbA/D family. In terms of assembly, PSII is composed of 1 copy each of membrane proteins PsbA, PsbB, PsbC, PsbD, PsbE, PsbF, PsbH, PsbI, PsbJ, PsbK, PsbL, PsbM, PsbT, PsbX, PsbY, PsbZ, Psb30/Ycf12, at least 3 peripheral proteins of the oxygen-evolving complex and a large number of cofactors. It forms dimeric complexes. The D1/D2 heterodimer binds P680, chlorophylls that are the primary electron donor of PSII, and subsequent electron acceptors. It shares a non-heme iron and each subunit binds pheophytin, quinone, additional chlorophylls, carotenoids and lipids. There is also a Cl(-1) ion associated with D1 and D2, which is required for oxygen evolution. The PSII complex binds additional chlorophylls, carotenoids and specific lipids. serves as cofactor.

The protein localises to the plastid. Its subcellular location is the chloroplast thylakoid membrane. The catalysed reaction is 2 a plastoquinone + 4 hnu + 2 H2O = 2 a plastoquinol + O2. In terms of biological role, photosystem II (PSII) is a light-driven water:plastoquinone oxidoreductase that uses light energy to abstract electrons from H(2)O, generating O(2) and a proton gradient subsequently used for ATP formation. It consists of a core antenna complex that captures photons, and an electron transfer chain that converts photonic excitation into a charge separation. The D1/D2 (PsbA/PsbD) reaction center heterodimer binds P680, the primary electron donor of PSII as well as several subsequent electron acceptors. D2 is needed for assembly of a stable PSII complex. The chain is Photosystem II D2 protein from Zygnema circumcarinatum (Green alga).